A 247-amino-acid polypeptide reads, in one-letter code: 3-deoxy-manno-octulosonate cytidylyltransferase (247 aa).

It belongs to the KdsB family.

The protein localises to the cytoplasm. The catalysed reaction is 3-deoxy-alpha-D-manno-oct-2-ulosonate + CTP = CMP-3-deoxy-beta-D-manno-octulosonate + diphosphate. Its pathway is nucleotide-sugar biosynthesis; CMP-3-deoxy-D-manno-octulosonate biosynthesis; CMP-3-deoxy-D-manno-octulosonate from 3-deoxy-D-manno-octulosonate and CTP: step 1/1. It participates in bacterial outer membrane biogenesis; lipopolysaccharide biosynthesis. Its function is as follows. Activates KDO (a required 8-carbon sugar) for incorporation into bacterial lipopolysaccharide in Gram-negative bacteria. The polypeptide is 3-deoxy-manno-octulosonate cytidylyltransferase (Methylobacterium sp. (strain 4-46)).